The following is a 465-amino-acid chain: ATP synthase subunit beta (465 aa).

An ATP-binding site is contributed by 152–159 (GGAGVGKT).

Belongs to the ATPase alpha/beta chains family. F-type ATPases have 2 components, CF(1) - the catalytic core - and CF(0) - the membrane proton channel. CF(1) has five subunits: alpha(3), beta(3), gamma(1), delta(1), epsilon(1). CF(0) has three main subunits: a(1), b(2) and c(9-12). The alpha and beta chains form an alternating ring which encloses part of the gamma chain. CF(1) is attached to CF(0) by a central stalk formed by the gamma and epsilon chains, while a peripheral stalk is formed by the delta and b chains.

Its subcellular location is the cell inner membrane. It catalyses the reaction ATP + H2O + 4 H(+)(in) = ADP + phosphate + 5 H(+)(out). Produces ATP from ADP in the presence of a proton gradient across the membrane. The catalytic sites are hosted primarily by the beta subunits. This is ATP synthase subunit beta from Campylobacter hominis (strain ATCC BAA-381 / DSM 21671 / CCUG 45161 / LMG 19568 / NCTC 13146 / CH001A).